The sequence spans 71 residues: Small ribosomal subunit protein bS21 (71 aa).

Residues 48–59 (AKASAVKRHAKK) show a composition bias toward basic residues. The tract at residues 48-71 (AKASAVKRHAKKLSRENARRIRLY) is disordered. Residues 60–71 (LSRENARRIRLY) show a composition bias toward basic and acidic residues.

This sequence belongs to the bacterial ribosomal protein bS21 family.

The protein is Small ribosomal subunit protein bS21 of Aeromonas hydrophila subsp. hydrophila (strain ATCC 7966 / DSM 30187 / BCRC 13018 / CCUG 14551 / JCM 1027 / KCTC 2358 / NCIMB 9240 / NCTC 8049).